The following is a 211-amino-acid chain: MTIGVVGRKCGMTRIFTEEGVSIPVTVIEVEPNRVTQFKTEETDGYRAVQVTAGERRASRVTKAQAGHFAKANVAAGRGVWEFRLGEEQYAAGDQITVDLFQAGQMVDVTGESKGKGFAGTIKRWNFRGQDNTHGNSVSHRVPGSIGQCQTPGRVFKGKKMSGHLGAERVTVQSLEIVRVDAERNLLLVKGAVPGATGGDVIVRPAAKARG.

Glutamine 150 bears the N5-methylglutamine mark.

Belongs to the universal ribosomal protein uL3 family. In terms of assembly, part of the 50S ribosomal subunit. Forms a cluster with proteins L14 and L19. Methylated by PrmB.

In terms of biological role, one of the primary rRNA binding proteins, it binds directly near the 3'-end of the 23S rRNA, where it nucleates assembly of the 50S subunit. In Pseudomonas aeruginosa (strain LESB58), this protein is Large ribosomal subunit protein uL3.